The chain runs to 147 residues: Large ribosomal subunit protein bL9 (147 aa).

Belongs to the bacterial ribosomal protein bL9 family.

Functionally, binds to the 23S rRNA. The chain is Large ribosomal subunit protein bL9 from Campylobacter jejuni subsp. doylei (strain ATCC BAA-1458 / RM4099 / 269.97).